The chain runs to 418 residues: Actin-related protein 3-B (418 aa).

Belongs to the actin family. ARP3 subfamily. Component of the Arp2/3 complex composed of actr2/arp2, actr3/arp3, arpc1 (arpc1a or arpc1b), arpc2, arpc3, arpc4 and arpc5.

Its subcellular location is the cytoplasm. The protein resides in the cytoskeleton. The protein localises to the cell projection. It localises to the nucleus. ATP-binding component of the Arp2/3 complex, a multiprotein complex that mediates actin polymerization upon stimulation by nucleation-promoting factor (NPF). The Arp2/3 complex mediates the formation of branched actin networks in the cytoplasm, providing the force for cell motility. Seems to contact the pointed end of the daughter actin filament. In addition to its role in the cytoplasmic cytoskeleton, the Arp2/3 complex also promotes actin polymerization in the nucleus, thereby regulating gene transcription and repair of damaged DNA. The Arp2/3 complex promotes homologous recombination (HR) repair in response to DNA damage by promoting nuclear actin polymerization, leading to drive motility of double-strand breaks (DSBs). This is Actin-related protein 3-B (actr3-b) from Xenopus laevis (African clawed frog).